A 99-amino-acid chain; its full sequence is MKRLTLVCSIVFILFILFYDLKIGTIPIQDLPVYEASAKTAVQEPAYKTVKVKPGDTVMSIVGSAGSPDDIVKDFEALNPNVKANAIQAGTAYKFPVYP.

A helical membrane pass occupies residues 6–26 (LVCSIVFILFILFYDLKIGTI). A LysM domain is found at 48-95 (KTVKVKPGDTVMSIVGSAGSPDDIVKDFEALNPNVKANAIQAGTAYKF).

It localises to the secreted. It is found in the cell wall. Its subcellular location is the membrane. This is an uncharacterized protein from Bacillus subtilis (strain 168).